The primary structure comprises 489 residues: Diacylglycerol O-acyltransferase 1 (489 aa).

Positions 1 to 54 (MGDRGGAGGSRRRRTGSRPSIQGGSGPAAAEEEVRDVGAGGDAPVRDTDKDGDV) are disordered. The Cytoplasmic portion of the chain corresponds to 1 to 80 (MGDRGGAGGS…SLFSSDSGFS (80 aa)). The tract at residues 1–88 (MGDRGGAGGS…FSNYRGILNW (88 aa)) is involved in homomerization. A Phosphoserine modification is found at Ser20. The segment covering 44 to 53 (PVRDTDKDGD) has biased composition (basic and acidic residues). Residues 81–115 (NYRGILNWCVVMLILSNARLFLENLIKYGILVDPI) form a helical membrane-spanning segment. At 116 to 127 (QVVSLFLKDPYS) the chain is on the lumenal side. An extracellular loop 1 (EL1) region spans residues 116–127 (QVVSLFLKDPYS). The helical transmembrane segment at 128–153 (WPALCLVIVANIFAVAAFQVEKRLAV) threads the bilayer. The interval 128-489 (WPALCLVIVA…LNREAPAAGT (362 aa)) is MBOAT fold. Over 154-158 (GALTE) the chain is Cytoplasmic. Residues 159 to 181 (QAGLLLHGVNLATILCFPAAVAF) form a helical membrane-spanning segment. The Lumenal portion of the chain corresponds to 182–188 (LLESITP). A helical transmembrane segment spans residues 189 to 220 (VGSVLALMVYTILFLKLFSYRDVNLWCRERRA). Residues 221-274 (GAKAKAALAGKKANGGAAQRTVSYPDNLTYRDLYYFLFAPTLCYELNFPRSPRI) lie on the Cytoplasmic side of the membrane. The segment at 225-277 (KAALAGKKANGGAAQRTVSYPDNLTYRDLYYFLFAPTLCYELNFPRSPRIRKR) is intracellular loop 1 (IL1). A helical membrane pass occupies residues 275–309 (RKRFLLRRLLEMLFLTQLQVGLIQQWMVPAIQNSM). The Lumenal segment spans residues 310–316 (KPFKDMD). The helical transmembrane segment at 317–354 (YSRIVERLLKLAVPNHLIWLIFFYWLFHSCLNAVAELM) threads the bilayer. Over 355–400 (QFGDREFYRDWWNSESITYFWQNWNIPVHKWCIRHFYKPMLRRGSS) the chain is Cytoplasmic. Residues 355-400 (QFGDREFYRDWWNSESITYFWQNWNIPVHKWCIRHFYKPMLRRGSS) form an intracellular loop 2 (IL2) region. An FYXDWWN motif motif is present at residues 361–367 (FYRDWWN). An acyl-CoA contacts are provided by residues 375–383 (WQNWNIPVH), Tyr391, and Arg405. Residues 381–395 (PVHKWCIRHFYKPML) form an amphipathic helix (AH) region. The helical transmembrane segment at 401 to 421 (KWAARTAVFLASAFFHEYLVS) threads the bilayer. Residue His416 is part of the active site. The Lumenal portion of the chain corresponds to 422–429 (IPLRMFRL). A helical membrane pass occupies residues 430–448 (WAFTGMMAQIPLAWIVGRF). Residues 449-450 (FR) are Cytoplasmic-facing. A helical transmembrane segment spans residues 451–482 (GNYGNAAVWLSLIIGQPVAVLMYVHDYYVLNR). Tyr478 is a binding site for an acyl-CoA. At 483-489 (EAPAAGT) the chain is on the lumenal side.

It belongs to the membrane-bound acyltransferase family. Sterol o-acyltransferase subfamily. As to quaternary structure, homodimer or homotetramer; both forms have similar enzymatic activities.

It is found in the endoplasmic reticulum membrane. It catalyses the reaction an acyl-CoA + a 1,2-diacyl-sn-glycerol = a triacyl-sn-glycerol + CoA. The enzyme catalyses all-trans-retinol + an acyl-CoA = an all-trans-retinyl ester + CoA. The catalysed reaction is 2-(9Z-octadecenoyl)-glycerol + (9Z)-octadecenoyl-CoA = 1,2-di-(9Z-octadecenoyl)-sn-glycerol + CoA. It carries out the reaction 1,2-di-(9Z-octadecenoyl)-sn-glycerol + (9Z)-octadecenoyl-CoA = 1,2,3-tri-(9Z-octadecenoyl)-glycerol + CoA. It catalyses the reaction all-trans-retinol + hexadecanoyl-CoA = all-trans-retinyl hexadecanoate + CoA. The enzyme catalyses 1-O-(9Z-octadecenyl)-glycerol + (9Z)-octadecenoyl-CoA = 1-O-(9Z-octadecyl)-3-(9Z-octadecenoyl)-glycerol + CoA. The catalysed reaction is 1-O-(9Z-octadecyl)-3-(9Z-octadecenoyl)-glycerol + (9Z)-octadecenoyl-CoA = 1-O-(9Z-octadecenyl)-2,3-di-(9Z-octadecenoyl)glycerol + CoA. It carries out the reaction 1-(9Z-octadecenoyl)-glycerol + (9Z)-octadecenoyl-CoA = 1,2-di-(9Z-octadecenoyl)-glycerol + CoA. It catalyses the reaction 1,2-di-(9Z-octadecenoyl)-glycerol + (9Z)-octadecenoate + H(+) = 1,2,3-tri-(9Z-octadecenoyl)-glycerol + H2O. The enzyme catalyses 1-octadecanoyl-2-(5Z,8Z,11Z,14Z-eicosatetraenoyl)-sn-glycerol + (9Z)-octadecenoyl-CoA = 1-octadecanoyl-2-(5Z,8Z,11Z,14Z)-eicosatetraenoyl-3-(9Z)-octadecenoyl-sn-glycerol + CoA. The catalysed reaction is hexadecane-1,2-diol + 2 hexadecanoyl-CoA = 1,2-O,O-dihexadecanoyl-1,2-hexadecanediol + 2 CoA. It carries out the reaction hexadecane-1,2-diol + hexadecanoyl-CoA = 2-hydroxyhexadecyl hexadecanoate + CoA. It catalyses the reaction 2-(9Z-octadecenoyl)-glycerol + hexadecanoyl-CoA = 1-hexadecanoyl-2-(9Z-octadecenoyl)-sn-glycerol + CoA. The enzyme catalyses 1,2-di-(9Z-octadecenoyl)-sn-glycerol + hexadecanoyl-CoA = 1,2-di-(9Z)-octadecenoyl-3-hexadecanoyl-sn-glycerol + CoA. The catalysed reaction is hexadecan-1-ol + hexadecanoyl-CoA = hexadecanyl hexadecanoate + CoA. It carries out the reaction 13-cis-retinol + hexadecanoyl-CoA = 13-cis-retinyl hexadecanoate + CoA. It catalyses the reaction 1,3-di-(9Z-octadecenoyl)-glycerol + (9Z)-octadecenoyl-CoA = 1,2,3-tri-(9Z-octadecenoyl)-glycerol + CoA. The enzyme catalyses 2,3-di-(9Z)-octadecenoyl-sn-glycerol + (9Z)-octadecenoyl-CoA = 1,2,3-tri-(9Z-octadecenoyl)-glycerol + CoA. Its pathway is lipid metabolism; glycerolipid metabolism. Catalyzes the terminal and only committed step in triacylglycerol synthesis by using diacylglycerol and fatty acyl CoA as substrates. Highly expressed in epithelial cells of the small intestine and its activity is essential for the absorption of dietary fats. In liver, plays a role in esterifying exogenous fatty acids to glycerol, and is required to synthesize fat for storage. Also present in female mammary glands, where it produces fat in the milk. May be involved in VLDL (very low density lipoprotein) assembly. In contrast to DGAT2 it is not essential for survival. Functions as the major acyl-CoA retinol acyltransferase (ARAT) in the skin, where it acts to maintain retinoid homeostasis and prevent retinoid toxicity leading to skin and hair disorders. Exhibits additional acyltransferase activities, includin acyl CoA:monoacylglycerol acyltransferase (MGAT), wax monoester and wax diester synthases. Also able to use 1-monoalkylglycerol (1-MAkG) as an acyl acceptor for the synthesis of monoalkyl-monoacylglycerol (MAMAG). The polypeptide is Diacylglycerol O-acyltransferase 1 (DGAT1) (Bos taurus (Bovine)).